A 244-amino-acid polypeptide reads, in one-letter code: MRIDILTLFPGMFSGVLSESILKKAQEKGAVDIRLIDFREFADNKHKTVDDYPYGGGAGMVLKPQPIFDAVEHVTAGSPGARIILLCPQGERYTQKKAEELAKETHLVLICGHYEGYDERIRQYLATDEISIGDYILTGGELGAMVIVDSVVRLLPGVLGNEASPVDDSFSSGLLEYPQYTRPADFRGMKVPDILLSGNHQLIAEWREKESLRRTFLRRPDLLDEYPLTDKQKQWLKEWEKERE.

Residues G112 and 132–137 (IGDYIL) contribute to the S-adenosyl-L-methionine site.

The protein belongs to the RNA methyltransferase TrmD family. As to quaternary structure, homodimer.

It localises to the cytoplasm. It carries out the reaction guanosine(37) in tRNA + S-adenosyl-L-methionine = N(1)-methylguanosine(37) in tRNA + S-adenosyl-L-homocysteine + H(+). Its function is as follows. Specifically methylates guanosine-37 in various tRNAs. The sequence is that of tRNA (guanine-N(1)-)-methyltransferase from Geobacillus kaustophilus (strain HTA426).